A 467-amino-acid chain; its full sequence is Megakaryocyte-associated tyrosine-protein kinase (467 aa).

Residues 1–20 form a disordered region; it reads MPTQRWAPGTQCMTKCENSR. An SH3 domain is found at 7–69; the sequence is APGTQCMTKC…AAAALRQREA (63 aa). The 90-residue stretch at 81–170 folds into the SH2 domain; the sequence is WFHGKISGQE…AICTKLVKPK (90 aa). Residues 194-443 enclose the Protein kinase domain; that stretch reads LTLGAQIGEG…IVEKLGRELR (250 aa). ATP contacts are provided by residues 200 to 208 and Lys221; that span reads IGEGEFGAV. Asp311 serves as the catalytic Proton acceptor. A disordered region spans residues 445–467; sequence VGVAAPAGGQEAEGSAPTRSQDP.

Belongs to the protein kinase superfamily. Tyr protein kinase family. CSK subfamily. Interacts with KIT. In terms of tissue distribution, enriched in lymphoid tissues.

The protein localises to the cytoplasm. It is found in the membrane. The catalysed reaction is L-tyrosyl-[protein] + ATP = O-phospho-L-tyrosyl-[protein] + ADP + H(+). Functionally, could play a significant role in the signal transduction of hematopoietic cells. May regulate tyrosine kinase activity of SRC-family members in brain. The protein is Megakaryocyte-associated tyrosine-protein kinase (Matk) of Rattus norvegicus (Rat).